The sequence spans 285 residues: 2-dehydro-3-deoxyphosphooctonate aldolase (285 aa).

It belongs to the KdsA family.

The protein resides in the cytoplasm. The catalysed reaction is D-arabinose 5-phosphate + phosphoenolpyruvate + H2O = 3-deoxy-alpha-D-manno-2-octulosonate-8-phosphate + phosphate. The protein operates within carbohydrate biosynthesis; 3-deoxy-D-manno-octulosonate biosynthesis; 3-deoxy-D-manno-octulosonate from D-ribulose 5-phosphate: step 2/3. It participates in bacterial outer membrane biogenesis; lipopolysaccharide biosynthesis. The protein is 2-dehydro-3-deoxyphosphooctonate aldolase of Acidovorax sp. (strain JS42).